We begin with the raw amino-acid sequence, 87 residues long: Small ribosomal subunit protein bS20 (87 aa).

It belongs to the bacterial ribosomal protein bS20 family.

Functionally, binds directly to 16S ribosomal RNA. The polypeptide is Small ribosomal subunit protein bS20 (Clostridium perfringens (strain 13 / Type A)).